Reading from the N-terminus, the 715-residue chain is Glycine--tRNA ligase beta subunit (715 aa).

Belongs to the class-II aminoacyl-tRNA synthetase family. As to quaternary structure, tetramer of two alpha and two beta subunits.

The protein localises to the cytoplasm. It catalyses the reaction tRNA(Gly) + glycine + ATP = glycyl-tRNA(Gly) + AMP + diphosphate. This chain is Glycine--tRNA ligase beta subunit, found in Nitrosomonas europaea (strain ATCC 19718 / CIP 103999 / KCTC 2705 / NBRC 14298).